The chain runs to 231 residues: uncharacterized protein (231 aa).

The chain crosses the membrane as a helical span at residues 10 to 30; the sequence is SQNIFFIAIVIFILSSVILYH.

The protein localises to the membrane. This is an uncharacterized protein from Rickettsia prowazekii (strain Madrid E).